A 26-amino-acid polypeptide reads, in one-letter code: Omega-conotoxin TVIA (26 aa).

Disulfide bonds link C1/C16, C8/C19, and C15/C26. 3 positions are modified to 4-hydroxyproline: P4, P10, and P21.

This sequence belongs to the conotoxin O1 superfamily. In terms of tissue distribution, expressed by the venom duct.

It localises to the secreted. Functionally, omega-conotoxins act at presynaptic membranes, they bind and block voltage-gated calcium channels (Cav). This chain is Omega-conotoxin TVIA, found in Conus tulipa (Fish-hunting cone snail).